We begin with the raw amino-acid sequence, 111 residues long: Cytochrome c (111 aa).

Ser1 is subject to N-acetylserine. Cys22, Cys25, and His26 together coordinate heme c. Lys80 bears the N6,N6,N6-trimethyllysine mark. Heme c is bound at residue Met88.

It belongs to the cytochrome c family. Binds 1 heme c group covalently per subunit.

The protein localises to the mitochondrion intermembrane space. Electron carrier protein. The oxidized form of the cytochrome c heme group can accept an electron from the heme group of the cytochrome c1 subunit of cytochrome reductase. Cytochrome c then transfers this electron to the cytochrome oxidase complex, the final protein carrier in the mitochondrial electron-transport chain. This Ulva intestinalis (Hollow green nori) protein is Cytochrome c.